A 247-amino-acid polypeptide reads, in one-letter code: Centromere protein H (247 aa).

At Met1 the chain carries N-acetylmethionine. Residues 1–14 (MEEQPQMQDADEPA) show a composition bias toward acidic residues. A disordered region spans residues 1 to 34 (MEEQPQMQDADEPADSGGEGRAGGPPQVAGAQAA). Ser16 bears the Phosphoserine mark. A compositionally biased stretch (low complexity) spans 24-34 (GPPQVAGAQAA). Positions 47 to 192 (RAQTKQQLLE…KIDLDSMENS (146 aa)) form a coiled coil. Residue Lys67 forms a Glycyl lysine isopeptide (Lys-Gly) (interchain with G-Cter in SUMO2) linkage. Thr68 carries the post-translational modification Phosphothreonine.

Belongs to the CENP-H/MCM16 family. In terms of assembly, self-associates. Component of the CENPA-NAC complex, at least composed of CENPA, CENPC, CENPH, CENPM, CENPN, CENPT and CENPU. The CENPA-NAC complex interacts with the CENPA-CAD complex, composed of CENPI, CENPK, CENPL, CENPO, CENPP, CENPQ, CENPR and CENPS. Interacts directly with CENPK. Interacts with KIF2C and NDC80. Interacts with TRIM36.

The protein localises to the nucleus. It localises to the chromosome. The protein resides in the centromere. Its subcellular location is the kinetochore. Component of the CENPA-NAC (nucleosome-associated) complex, a complex that plays a central role in assembly of kinetochore proteins, mitotic progression and chromosome segregation. The CENPA-NAC complex recruits the CENPA-CAD (nucleosome distal) complex and may be involved in incorporation of newly synthesized CENPA into centromeres. Required for chromosome congression and efficiently align the chromosomes on a metaphase plate. This chain is Centromere protein H, found in Homo sapiens (Human).